A 459-amino-acid polypeptide reads, in one-letter code: Cysteine--tRNA ligase (459 aa).

Cys31 lines the Zn(2+) pocket. A 'HIGH' region motif is present at residues 33 to 43 (PTVYDNPHIGN). Cys216, His241, and Glu245 together coordinate Zn(2+). The 'KMSKS' region motif lies at 274–278 (KMSKS). Lys277 contributes to the ATP binding site.

It belongs to the class-I aminoacyl-tRNA synthetase family. Monomer. Zn(2+) serves as cofactor.

It localises to the cytoplasm. The catalysed reaction is tRNA(Cys) + L-cysteine + ATP = L-cysteinyl-tRNA(Cys) + AMP + diphosphate. This chain is Cysteine--tRNA ligase, found in Rickettsia canadensis (strain McKiel).